A 1741-amino-acid chain; its full sequence is S-layer protein (1741 aa).

Residues 894–904 (SFTSDSANGSG) are compositionally biased toward polar residues. The interval 894 to 913 (SFTSDSANGSGHSVEGGTGD) is disordered.

Glycosylated.

The protein resides in the secreted. Its subcellular location is the cell wall. The protein localises to the S-layer. Its function is as follows. S-layer protein. The S-layer is a paracrystalline mono-layered assembly of proteins which coats the surface of bacteria. Under laboratory conditions, has a supportive but not a critical role in the function of the cyanobacterium. Shows no apparent hemolytic activity against sheep erythrocytes, however, a slight hemolytic activity is detected during the conformational change caused by the rebinding of Ca(2+). The sequence is that of S-layer protein from Synechocystis sp. (strain ATCC 27184 / PCC 6803 / Kazusa).